The following is a 131-amino-acid chain: L-ectoine synthase (131 aa).

This sequence belongs to the ectoine synthase family.

The catalysed reaction is (2S)-4-acetamido-2-aminobutanoate = L-ectoine + H2O. It participates in amine and polyamine biosynthesis; ectoine biosynthesis; L-ectoine from L-aspartate 4-semialdehyde: step 3/3. Its function is as follows. Catalyzes the circularization of gamma-N-acetyl-alpha,gamma-diaminobutyric acid (ADABA) to ectoine (1,4,5,6-tetrahydro-2-methyl-4-pyrimidine carboxylic acid), which is an excellent osmoprotectant. This is L-ectoine synthase from Nocardia farcinica (strain IFM 10152).